The chain runs to 176 residues: Probable inosine/xanthosine triphosphatase (176 aa).

Position 36 (D36) interacts with Mg(2+).

The protein belongs to the YjjX NTPase family. In terms of assembly, homodimer. It depends on Mg(2+) as a cofactor. Mn(2+) serves as cofactor.

It carries out the reaction XTP + H2O = XDP + phosphate + H(+). The catalysed reaction is ITP + H2O = IDP + phosphate + H(+). Functionally, phosphatase that hydrolyzes non-canonical purine nucleotides such as XTP and ITP to their respective diphosphate derivatives. Probably excludes non-canonical purines from DNA/RNA precursor pool, thus preventing their incorporation into DNA/RNA and avoiding chromosomal lesions. This chain is Probable inosine/xanthosine triphosphatase, found in Saccharolobus islandicus (strain M.14.25 / Kamchatka #1) (Sulfolobus islandicus).